The primary structure comprises 337 residues: DNA-directed RNA polymerase subunit alpha (337 aa).

An alpha N-terminal domain (alpha-NTD) region spans residues 1-233 (MVREKVTVST…DLFIPFLHIE (233 aa)). The interval 265–337 (KKIALKSIFI…FVIDLAKNEF (73 aa)) is alpha C-terminal domain (alpha-CTD).

This sequence belongs to the RNA polymerase alpha chain family. In terms of assembly, in plastids the minimal PEP RNA polymerase catalytic core is composed of four subunits: alpha, beta, beta', and beta''. When a (nuclear-encoded) sigma factor is associated with the core the holoenzyme is formed, which can initiate transcription.

The protein localises to the plastid. The protein resides in the chloroplast. The catalysed reaction is RNA(n) + a ribonucleoside 5'-triphosphate = RNA(n+1) + diphosphate. Its function is as follows. DNA-dependent RNA polymerase catalyzes the transcription of DNA into RNA using the four ribonucleoside triphosphates as substrates. This is DNA-directed RNA polymerase subunit alpha from Nicotiana tomentosiformis (Tobacco).